The chain runs to 264 residues: MNYLNIYNLLIEKGLNRGNDKSLLTYYTETHHIIPRCMGGTDDKTNLVLLTPEEHFTAHLLLFKIYRLPKLALAIRMMCYSSDGTRLNNKMYGWIKTAVSSSISESMKEFWKDDDNKKYMSNARRNAGKPIYQYDLNGNFIRKYRCITDAAEDMSYSCSTSIKQCVDGKRKTAGGFQWKYYYSDNIGKPSRMSNATKQKMSKSKRGITQKRNVPVFQYDTTGKLLRVFPRIKDAAVSVKGCMSNIKKCISGKSKIAYGYVWAYS.

The 26-residue stretch at 25–50 (TYYTETHHIIPRCMGGTDDKTNLVLL) folds into the HNH domain.

To phage T4 mobC and mobD.

In Escherichia coli (Bacteriophage T4), this protein is Probable mobile endonuclease B (mobB).